Reading from the N-terminus, the 872-residue chain is uncharacterized protein (872 aa).

The stretch at 496–524 (LQQHHQDISAMQQQILEEKNQLRRATIDV) forms a coiled coil. Disordered stretches follow at residues 595–736 (RPAV…SVQQ) and 844–872 (TKEN…PQAV). 2 stretches are compositionally biased toward polar residues: residues 615–659 (QNGN…QTTF) and 670–686 (PYAS…NNVV). Residues 687 to 736 (QQYQSYYDNPSNQQSNQQSNQQSNQQPNQQPNQQPNQQPNQQPNQQSVQQ) are compositionally biased toward low complexity.

The protein resides in the virion. This is an uncharacterized protein from Acanthamoeba polyphaga mimivirus (APMV).